The sequence spans 394 residues: Imidazolonepropionase (394 aa).

Positions 61 and 63 each coordinate Fe(3+). Zn(2+)-binding residues include His61 and His63. The 4-imidazolone-5-propanoate site is built by Arg70, Tyr133, and His164. Tyr133 lines the N-formimidoyl-L-glutamate pocket. His225 is a binding site for Fe(3+). His225 lines the Zn(2+) pocket. Glu228 is a binding site for 4-imidazolone-5-propanoate. Residue Asp299 coordinates Fe(3+). Residue Asp299 coordinates Zn(2+).

This sequence belongs to the metallo-dependent hydrolases superfamily. HutI family. Zn(2+) serves as cofactor. The cofactor is Fe(3+).

It is found in the cytoplasm. It catalyses the reaction 4-imidazolone-5-propanoate + H2O = N-formimidoyl-L-glutamate. The protein operates within amino-acid degradation; L-histidine degradation into L-glutamate; N-formimidoyl-L-glutamate from L-histidine: step 3/3. In terms of biological role, catalyzes the hydrolytic cleavage of the carbon-nitrogen bond in imidazolone-5-propanoate to yield N-formimidoyl-L-glutamate. It is the third step in the universal histidine degradation pathway. In Picrophilus torridus (strain ATCC 700027 / DSM 9790 / JCM 10055 / NBRC 100828 / KAW 2/3), this protein is Imidazolonepropionase.